Here is a 218-residue protein sequence, read N- to C-terminus: Adenylate kinase (218 aa).

10–15 (GAGKGT) contacts ATP. The segment at 30 to 59 (STGDMIRETIKSGSALGQELKKVLDAGELV) is NMP. AMP is bound by residues Thr31, Arg36, 57-59 (ELV), and Gln92. The segment at 122–159 (GRRIHPASGRTYHTKFNPPKVADKDDVTGEPLITRTDD) is LID. ATP is bound by residues Arg123 and 132–133 (TY). AMP is bound by residues Arg156 and Arg167. An ATP-binding site is contributed by Gln202.

It belongs to the adenylate kinase family. As to quaternary structure, monomer.

It localises to the cytoplasm. The enzyme catalyses AMP + ATP = 2 ADP. The protein operates within purine metabolism; AMP biosynthesis via salvage pathway; AMP from ADP: step 1/1. Functionally, catalyzes the reversible transfer of the terminal phosphate group between ATP and AMP. Plays an important role in cellular energy homeostasis and in adenine nucleotide metabolism. The chain is Adenylate kinase from Francisella tularensis subsp. tularensis (strain FSC 198).